The following is a 483-amino-acid chain: Altronate oxidoreductase (483 aa).

18–29 (IIQFGEGNFLRA) contributes to the NAD(+) binding site.

The protein belongs to the mannitol dehydrogenase family. UxaB subfamily.

The enzyme catalyses D-altronate + NAD(+) = keto-D-tagaturonate + NADH + H(+). It functions in the pathway carbohydrate metabolism; pentose and glucuronate interconversion. The sequence is that of Altronate oxidoreductase from Yersinia enterocolitica serotype O:8 / biotype 1B (strain NCTC 13174 / 8081).